Here is a 1012-residue protein sequence, read N- to C-terminus: Formate dehydrogenase 2 subunit alpha (cytochrome c-553) (1012 aa).

Residues 1–33 (MKTTRRSFLKLVGVSVVGLSLGQLGFDLEDAQA) constitute a signal peptide (tat-type signal). Residues 43–99 (AKEVGTVCPFCSVCCQVIAYVRNGKLVSTEGDPDFPVNEGALCAKGAALFSMYTNPH) form the 4Fe-4S Mo/W bis-MGD-type domain. [4Fe-4S] cluster is bound by residues Cys50, Cys53, Cys57, and Cys85. Sec189 is a binding site for W-bis(molybdopterin guanine dinucleotide). Position 189 (Sec189) is a non-standard amino acid, selenocysteine. Ca(2+) is bound by residues Thr389, Arg391, Lys394, Leu424, and Asn426.

Belongs to the prokaryotic molybdopterin-containing oxidoreductase family. In terms of assembly, heterotrimer of cytochrome c3 FDH2C and formate dehydrogenase FDH2 alpha and beta subunits that forms the FdhABC(3) complex. The cofactor is [4Fe-4S] cluster. W-bis(molybdopterin guanine dinucleotide) serves as cofactor. In terms of processing, predicted to be exported by the Tat system. The position of the signal peptide cleavage has not been experimentally proven.

It localises to the periplasm. It carries out the reaction 2 Fe(III)-[cytochrome c553] + formate = 2 Fe(II)-[cytochrome c553] + CO2 + H(+). Alpha chain of the formate dehydrogenase (FDH) that catalyzes the reversible two-electron oxidation of formate to carbon dioxide. The alpha subunit of formate dehydrogenase forms the active site. The polypeptide is Formate dehydrogenase 2 subunit alpha (cytochrome c-553) (Nitratidesulfovibrio vulgaris (strain ATCC 29579 / DSM 644 / CCUG 34227 / NCIMB 8303 / VKM B-1760 / Hildenborough) (Desulfovibrio vulgaris)).